The following is a 225-amino-acid chain: Pyrimidine 5'-nucleotidase YjjG (225 aa).

D9 functions as the Nucleophile in the catalytic mechanism.

Belongs to the HAD-like hydrolase superfamily. YjjG family. In terms of assembly, monomer, homodimer and possibly homotetramer in solution. Mn(2+) is required as a cofactor. It depends on Mg(2+) as a cofactor. The cofactor is Co(2+).

It localises to the cytoplasm. The enzyme catalyses a ribonucleoside 5'-phosphate + H2O = a ribonucleoside + phosphate. The catalysed reaction is a 2'-deoxyribonucleoside 5'-phosphate + H2O = a 2'-deoxyribonucleoside + phosphate. It catalyses the reaction UMP + H2O = uridine + phosphate. It carries out the reaction dUMP + H2O = 2'-deoxyuridine + phosphate. The enzyme catalyses dTMP + H2O = thymidine + phosphate. With respect to regulation, in contrast to nucleotidases from other families, is not inhibited by ribo- and deoxyribonucleoside di- and triphosphates. Functionally, nucleotidase that shows high phosphatase activity toward non-canonical pyrimidine nucleotides and three canonical nucleoside 5'-monophosphates (UMP, dUMP, and dTMP), and very low activity against TDP, IMP, UDP, GMP, dGMP, AMP, dAMP, and 6-phosphogluconate. Appears to function as a house-cleaning nucleotidase in vivo, since the general nucleotidase activity of YjjG allows it to protect cells against non-canonical pyrimidine derivatives such as 5-fluoro-2'-deoxyuridine, 5-fluorouridine, 5-fluoroorotate, 5-fluorouracil, and 5-aza-2'-deoxycytidine, and prevents the incorporation of potentially mutagenic nucleotides into DNA. Its dUMP phosphatase activity that catalyzes the hydrolysis of dUMP to deoxyuridine is necessary for thymine utilization via the thymine salvage pathway. Is strictly specific to substrates with 5'-phosphates and shows no activity against nucleoside 2'- or 3'-monophosphates. The chain is Pyrimidine 5'-nucleotidase YjjG (yjjG) from Escherichia coli (strain K12).